The chain runs to 1597 residues: Pentafunctional AROM polypeptide (1597 aa).

The segment at 1–384 (MGVPTKISIL…HEPRASTVSN (384 aa)) is 3-dehydroquinate synthase. Residues 44–46 (DTN), 81–84 (ESSK), 114–116 (GGV), and Asp119 contribute to the NAD(+) site. Arg130 lines the 7-phospho-2-dehydro-3-deoxy-D-arabino-heptonate pocket. Position 139–140 (139–140 (TT)) interacts with NAD(+). 7-phospho-2-dehydro-3-deoxy-D-arabino-heptonate contacts are provided by Asp146 and Lys152. Lys161 serves as a coordination point for NAD(+). Asn162 is a 7-phospho-2-dehydro-3-deoxy-D-arabino-heptonate binding site. Residues 179–182 (FLNT) and Asn190 contribute to the NAD(+) site. Zn(2+) is bound at residue Glu194. Residues 194-197 (EVIK) and Lys250 each bind 7-phospho-2-dehydro-3-deoxy-D-arabino-heptonate. The active-site Proton acceptor; for 3-dehydroquinate synthase activity is the Glu260. 7-phospho-2-dehydro-3-deoxy-D-arabino-heptonate contacts are provided by residues 264–268 (RNLLN) and His271. His271 is a binding site for Zn(2+). His275 functions as the Proton acceptor; for 3-dehydroquinate synthase activity in the catalytic mechanism. 7-phospho-2-dehydro-3-deoxy-D-arabino-heptonate is bound by residues His287 and Lys356. His287 contacts Zn(2+). The interval 397 to 842 (VSPGVPKNLN…WDSLAQTFKV (446 aa)) is EPSP synthase. Cys824 serves as the catalytic For EPSP synthase activity. Residues 866-1057 (ASIFIIGMRG…RSKENTFFVS (192 aa)) form a shikimate kinase region. 872–879 (GMRGAGKT) serves as a coordination point for ATP. A 3-dehydroquinase region spans residues 1058–1278 (LTLPDLAPAA…AAPGQLSARE (221 aa)). The active-site Proton acceptor; for 3-dehydroquinate dehydratase activity is the His1181. Residue Lys1209 is the Schiff-base intermediate with substrate; for 3-dehydroquinate dehydratase activity of the active site. The shikimate dehydrogenase stretch occupies residues 1291 to 1597 (SKKFAVIGNP…VQPKDDDIST (307 aa)).

In the N-terminal section; belongs to the sugar phosphate cyclases superfamily. Dehydroquinate synthase family. This sequence in the 2nd section; belongs to the EPSP synthase family. It in the 3rd section; belongs to the shikimate kinase family. The protein in the 4th section; belongs to the type-I 3-dehydroquinase family. In the C-terminal section; belongs to the shikimate dehydrogenase family. In terms of assembly, homodimer. Zn(2+) serves as cofactor.

The protein localises to the cytoplasm. It carries out the reaction 7-phospho-2-dehydro-3-deoxy-D-arabino-heptonate = 3-dehydroquinate + phosphate. The enzyme catalyses 3-dehydroquinate = 3-dehydroshikimate + H2O. It catalyses the reaction shikimate + NADP(+) = 3-dehydroshikimate + NADPH + H(+). The catalysed reaction is shikimate + ATP = 3-phosphoshikimate + ADP + H(+). It carries out the reaction 3-phosphoshikimate + phosphoenolpyruvate = 5-O-(1-carboxyvinyl)-3-phosphoshikimate + phosphate. The protein operates within metabolic intermediate biosynthesis; chorismate biosynthesis; chorismate from D-erythrose 4-phosphate and phosphoenolpyruvate: step 2/7. It functions in the pathway metabolic intermediate biosynthesis; chorismate biosynthesis; chorismate from D-erythrose 4-phosphate and phosphoenolpyruvate: step 3/7. Its pathway is metabolic intermediate biosynthesis; chorismate biosynthesis; chorismate from D-erythrose 4-phosphate and phosphoenolpyruvate: step 4/7. It participates in metabolic intermediate biosynthesis; chorismate biosynthesis; chorismate from D-erythrose 4-phosphate and phosphoenolpyruvate: step 5/7. The protein operates within metabolic intermediate biosynthesis; chorismate biosynthesis; chorismate from D-erythrose 4-phosphate and phosphoenolpyruvate: step 6/7. Functionally, the AROM polypeptide catalyzes 5 consecutive enzymatic reactions in prechorismate polyaromatic amino acid biosynthesis. The chain is Pentafunctional AROM polypeptide from Blastomyces gilchristii (strain SLH14081) (Blastomyces dermatitidis).